The sequence spans 36 residues: Protein usd (36 aa).

In terms of biological role, required for translation of SpoIIID. This is Protein usd (usd) from Bacillus subtilis (strain 168).